We begin with the raw amino-acid sequence, 205 residues long: Disintegrin-like leberagin-C (205 aa).

One can recognise a Disintegrin domain in the interval 4-90 (PPVCGNELLE…DCPIDRFHRN (87 aa)). 9 disulfides stabilise this stretch: Cys7-Cys26, Cys18-Cys36, Cys62-Cys82, Cys69-Cys94, Cys101-Cys106, Cys113-Cys128, Cys151-Cys158, Cys163-Cys171, and Cys193-Cys198. The short motif at 68–70 (ECD) is the D/ECD-tripeptide element. A glycan (N-linked (GlcNAc...) asparagine) is linked at Asn120.

The protein belongs to the venom metalloproteinase (M12B) family. P-III subfamily. P-IIIb sub-subfamily. In terms of assembly, monomer. In terms of tissue distribution, expressed by the venom gland.

The protein localises to the secreted. Functionally, inhibits platelet aggregation induced by thrombin and arachidonic acid with IC(50) of 40 and 50 nM respectively (in rabbit platetelet-rich plasma). It also inhibits the adhesion of melanoma tumor cells on fibrinogen and fibronectin, by interfering with the function of alpha-V/beta-3 (ITGAV/ITGB3) and, to a lesser extent, with alpha-V/beta-6 (ITGAV/ITGB6) and alpha-5/beta-1 (ITGA5/ITGB1) integrins. This chain is Disintegrin-like leberagin-C, found in Macrovipera lebetina transmediterranea (Blunt-nosed viper).